Reading from the N-terminus, the 86-residue chain is Serine protease inhibitor Kazal-type 4 (86 aa).

The signal sequence occupies residues methionine 1 to alanine 26. Positions phenylalanine 31–cysteine 86 constitute a Kazal-like domain. Cystine bridges form between cysteine 37-cysteine 68, cysteine 46-cysteine 65, and cysteine 54-cysteine 86.

As to expression, expressed in the intestinal tract.

It localises to the secreted. This is Serine protease inhibitor Kazal-type 4 (Spink4) from Mus musculus (Mouse).